The following is a 1326-amino-acid chain: F-box/WD repeat-containing protein 7 (1326 aa).

6 disordered regions span residues 1–58, 123–187, 318–351, 399–549, 615–642, and 797–843; these read MERG…AEVG, DSSS…IEDE, TVSN…ALSR, GSKA…SGCS, RSNP…RNGS, and TPRS…NPPP. Polar residues predominate over residues 9–39; sequence SSESVTSAGERTQSAVTSSTSTWVKSQASTS. Residues 165 to 187 are compositionally biased toward acidic residues; sequence NDDDDDEEPEPEEDDEEELIEDE. Residues 320-348 show a composition bias toward low complexity; it reads SNPSPAASANAAAPEEASTSNSSSTSSSA. Residues 403–464 are compositionally biased toward polar residues; sequence ANGSGTANSD…KLNLGSSLGA (62 aa). The span at 465-486 shows a compositional bias: low complexity; it reads SSCSQHRSGSSSTSKSMESSTS. The segment covering 495 to 504 has biased composition (polar residues); it reads VYTNTNSNDY. Composition is skewed to low complexity over residues 510–520, 528–546, and 616–631; these read TTSGSSTSGGS, NVSA…SQES, and SNPP…GANP. Composition is skewed to polar residues over residues 632-642 and 797-824; these read TASVRQRRNGS and TPRS…STPG. Thr-813 carries the phosphothreonine modification. Position 825 is a phosphoserine (Ser-825). An F-box domain is found at 889–935; the sequence is RDFISLLPRELALFVLSYLEPKDLLRAAQTCRSWRFLCDDNLLWKEK. WD repeat units lie at residues 992-1030, 1033-1070, 1073-1110, 1113-1150, 1153-1190, 1193-1232, and 1236-1273; these read GHDD…CLRT, GHTG…CVHT, GHTS…CLHV, GHLA…CLHT, GHTN…CKHT, GHQS…QTLS, and KHHS…FIRN.

Part of a SCF E3 ubiquitin-protein ligase complex. Interacts with Myc and puf. Interacts with CycE. As to expression, expressed in follicle cell epithelium and imaginal disks, particularly in the morphogenetic furrow.

The protein resides in the nucleus. It functions in the pathway protein modification; protein ubiquitination. Substrate recognition component of a SCF (SKP1-CUL1-F-box protein) E3 ubiquitin-protein ligase complex which mediates the ubiquitination and subsequent proteasomal degradation of target proteins. Probably recognizes and binds to phosphorylated target proteins. In the wing and eye, negatively regulates cell growth and proliferation by mediating the degradation of Myc and cyclin E, respectively. Required for endocycles, but not mitosis in follicle cell epithelium. This Drosophila melanogaster (Fruit fly) protein is F-box/WD repeat-containing protein 7.